The following is an 81-amino-acid chain: Small serum protein 4 (81 aa).

A signal peptide spans 1-19; the sequence is MKVFFILIIFSFTLATCQG. 3 disulfides stabilise this stretch: cysteine 21-cysteine 74, cysteine 41-cysteine 66, and cysteine 64-cysteine 73.

It belongs to the beta-microseminoprotein family.

It is found in the secreted. Its function is as follows. Shows an slight inhibitory effect toward the metalloproteinase brevilysin H6, but does not inhibit the metalloproteinases thermolysin, HR1A and HR1B. This is Small serum protein 4 from Protobothrops flavoviridis (Habu).